A 228-amino-acid polypeptide reads, in one-letter code: 2-C-methyl-D-erythritol 4-phosphate cytidylyltransferase (228 aa).

This sequence belongs to the IspD/TarI cytidylyltransferase family. IspD subfamily.

It carries out the reaction 2-C-methyl-D-erythritol 4-phosphate + CTP + H(+) = 4-CDP-2-C-methyl-D-erythritol + diphosphate. Its pathway is isoprenoid biosynthesis; isopentenyl diphosphate biosynthesis via DXP pathway; isopentenyl diphosphate from 1-deoxy-D-xylulose 5-phosphate: step 2/6. Its function is as follows. Catalyzes the formation of 4-diphosphocytidyl-2-C-methyl-D-erythritol from CTP and 2-C-methyl-D-erythritol 4-phosphate (MEP). The polypeptide is 2-C-methyl-D-erythritol 4-phosphate cytidylyltransferase (Halalkalibacterium halodurans (strain ATCC BAA-125 / DSM 18197 / FERM 7344 / JCM 9153 / C-125) (Bacillus halodurans)).